The chain runs to 1778 residues: Ankyrin repeat domain-containing protein 36C (1778 aa).

ANK repeat units lie at residues 64-93 (KERT…ELNL), 97-126 (EDRT…DPNI), 130-159 (FGRT…NIEE), 163-192 (DEYP…NINA), and 196-225 (LGRS…DVFS). Disordered regions lie at residues 260 to 365 (LSIN…DEQK), 501 to 526 (ALPA…VKDS), 538 to 653 (DSLT…QKQS), 671 to 1027 (RITG…QKQL), and 1051 to 1072 (IRGT…EKDS). Composition is skewed to polar residues over residues 261–272 (SINSNPVSSQKQ) and 297–306 (KSGTVSSQKQ). Residues 539 to 555 (SLTSSEESSERPPLSTL) are compositionally biased toward low complexity. Basic and acidic residues-rich tracts occupy residues 585 to 596 (PAEKATSDDKDS) and 619 to 630 (PAEKATSDEKDS). 2 stretches are compositionally biased toward polar residues: residues 631–653 (VSNI…QKQS) and 679–691 (GTVS…PSKA). Residues 794–813 (TSDEKDSFSNITREKKDGEI) are compositionally biased toward basic and acidic residues. S829 carries the phosphoserine modification. Composition is skewed to basic and acidic residues over residues 840–849 (RGKEDGEKTR) and 862–881 (TSDE…DGET). Position 897 is a phosphoserine (S897). Positions 907–917 (AREKKDGEKSR) are enriched in basic and acidic residues. Residues 942–955 (RGKKHGEKTRRVSS) show a composition bias toward basic residues. 2 stretches are compositionally biased toward polar residues: residues 983–992 (ISGTVSSQKQ) and 1005–1026 (VSNI…SQKQ). Coiled-coil stretches lie at residues 1157 to 1187 (EQDL…QIHS), 1247 to 1333 (ELKD…YRIE), 1362 to 1480 (SETD…DHDQ), and 1544 to 1768 (VFEH…ILQH).

This sequence belongs to the ANKRD36 family.

The chain is Ankyrin repeat domain-containing protein 36C (ANKRD36C) from Homo sapiens (Human).